Consider the following 392-residue polypeptide: Olfactomedin-like protein 3 (392 aa).

Residues 1–21 (MGPWRCLLLLPLLAAAPRAQQ) form the signal peptide. The stretch at 25–99 (MEYVERRLAL…REVDYLETQN (75 aa)) forms a coiled coil. In terms of domain architecture, Olfactomedin-like spans 132–388 (DCSDTIASVR…QIIYRMEMKK (257 aa)). Cys133 and Cys315 are joined by a disulfide. N-linked (GlcNAc...) asparagine glycans are attached at residues Asn175 and Asn235.

The protein belongs to the OLFML3 family.

It localises to the secreted. Its function is as follows. Secreted scaffold protein that plays an essential role in dorsoventral patterning during early development. Stabilizes axial formation by restricting chordin (CHRD) activity on the dorsal side. Acts by facilitating the association between the tolloid proteases and their substrate chordin (CHRD), leading to enhance chordin (CHRD) degradation. This is Olfactomedin-like protein 3 (OLFML3) from Gallus gallus (Chicken).